Here is a 927-residue protein sequence, read N- to C-terminus: Roc-COR-CHAT protease (927 aa).

LRR repeat units follow at residues 38–61 (AGQV…TEAQ), 83–107 (LPHL…GFRS), 109–125 (QQVY…VFEG), and 127–151 (CPAL…GFRA). Residues 152–170 (LKYIYATNNVLQKITFNRS) form an LRR 5 region. 2 LRR repeats span residues 171 to 194 (MRLL…LSEI) and 195 to 217 (ETME…IWDR). The COR domain maps to 436 to 623 (EWLGVKEDLN…ELRWKKGVVL (188 aa)). Active-site residues include histidine 796 and cysteine 840.

In terms of biological role, a dedicated protease for gasdermin bGSDM; cleaves the bGSDM precursor, releasing the pore-forming moiety, which integrates into the membrane and triggers cell death. Probably involved in defense against bacteriophages. Expression of bGSDM and this neighboring protease is highly toxic in E.coli. Cells expressing the gene pair stop dividing and lose membrane integrity. Both proteins are required to kill E.coli. The bGSDM recognition site is larger than the 8 residues surrounding the cleavage site; replacement of the endogenous recognition site by the Runella site (NRVLGENM) in a number of other bGSDMs is not sufficient for them to be cleaved. In Runella zeae (strain ATCC BAA-293 / DSM 19591 / LMG 21438 / NS12), this protein is Roc-COR-CHAT protease.